The following is a 777-amino-acid chain: Ethylene receptor 4 (777 aa).

Transmembrane regions (helical) follow at residues 49–69 (LLIA…ATCA), 77–97 (AVLH…LAAF), and 113–133 (AAKV…LTFI). Residues Cys-88 and His-92 each contribute to the Cu cation site. One can recognise a GAF domain in the interval 184–344 (DAHAILRTTA…VVADQAAVAL (161 aa)). One can recognise a Histidine kinase domain in the interval 387-521 (AMCHAMRRPV…NTGSGACRLS (135 aa)). His-390 bears the Phosphohistidine; by autocatalysis mark. Residues 645–774 (RVLLADDDAM…ALGAQLCRVL (130 aa)) enclose the Response regulatory domain. Asp-696 is modified (4-aspartylphosphate).

The protein belongs to the ethylene receptor family. It depends on Cu cation as a cofactor.

The protein resides in the endoplasmic reticulum membrane. The enzyme catalyses ATP + protein L-histidine = ADP + protein N-phospho-L-histidine.. Functionally, ethylene receptor related to bacterial two-component regulators. Acts as a redundant negative regulator of ethylene signaling. This is Ethylene receptor 4 (ETR4) from Oryza sativa subsp. japonica (Rice).